The primary structure comprises 295 residues: Nucleotide-binding protein SSU98_0619 (295 aa).

12 to 19 (GMSGAGKT) is an ATP binding site. 62–65 (DMRS) serves as a coordination point for GTP.

It belongs to the RapZ-like family.

Functionally, displays ATPase and GTPase activities. This is Nucleotide-binding protein SSU98_0619 from Streptococcus suis (strain 98HAH33).